A 278-amino-acid polypeptide reads, in one-letter code: 4-deoxy-L-threo-5-hexosulose-uronate ketol-isomerase (278 aa).

The Zn(2+) site is built by histidine 196, histidine 198, glutamate 203, and histidine 245.

Belongs to the KduI family. Zn(2+) is required as a cofactor.

It catalyses the reaction 5-dehydro-4-deoxy-D-glucuronate = 3-deoxy-D-glycero-2,5-hexodiulosonate. It functions in the pathway glycan metabolism; pectin degradation; 2-dehydro-3-deoxy-D-gluconate from pectin: step 4/5. Its function is as follows. Catalyzes the isomerization of 5-dehydro-4-deoxy-D-glucuronate to 3-deoxy-D-glycero-2,5-hexodiulosonate. This is 4-deoxy-L-threo-5-hexosulose-uronate ketol-isomerase from Salmonella choleraesuis (strain SC-B67).